The following is a 483-amino-acid chain: Probable Xaa-Pro aminopeptidase MCYG_06503 (483 aa).

Mn(2+)-binding residues include Asp-233, Asp-244, Glu-409, and Glu-453.

This sequence belongs to the peptidase M24B family. Mn(2+) serves as cofactor.

It carries out the reaction Release of any N-terminal amino acid, including proline, that is linked to proline, even from a dipeptide or tripeptide.. Catalyzes the removal of a penultimate prolyl residue from the N-termini of peptides. The protein is Probable Xaa-Pro aminopeptidase MCYG_06503 of Arthroderma otae (strain ATCC MYA-4605 / CBS 113480) (Microsporum canis).